The primary structure comprises 595 residues: MATELLCLHRPISLTHKLFRNPLPKVIQATPLTLKLRCSVSTENVSFTETETEARRSANYEPNSWDYDYLLSSDTDESIEVYKDKAKKLEAEVRREINNEKAEFLTLLELIDNVQRLGLGYRFESDIRGALDRFVSSGGFDAVTKTSLHGTALSFRLLRQHGFEVSQEAFSGFKDQNGNFLENLKEDIKAILSLYEASFLALEGENILDEAKVFAISHLKELSEEKIGKELAEQVNHALELPLHRRTQRLEAVWSIEAYRKKEDANQVLLELAILDYNMIQSVYQRDLRETSRWWRRVGLATKLHFARDRLIESFYWAVGVAFEPQYSDCRNSVAKMFSFVTIIDDIYDVYGTLDELELFTDAVERWDVNAINDLPDYMKLCFLALYNTINEIAYDNLKDKGENILPYLTKAWADLCNAFLQEAKWLYNKSTPTFDDYFGNAWKSSSGPLQLVFAYFAVVQNIKKEEIENLQKYHDTISRPSHIFRLCNDLASASAEIARGETANSVSCYMRTKGISEELATESVMNLIDETWKKMNKEKLGGSLFAKPFVETAINLARQSHCTYHNGDAHTSPDELTRKRVLSVITEPILPFER.

A chloroplast-targeting transit peptide spans 1–37 (MATELLCLHRPISLTHKLFRNPLPKVIQATPLTLKLR). Asp345 is a dimethylallyl diphosphate binding site. The Mg(2+) site is built by Asp345 and Asp349. Residues 345-349 (DDIYD) carry the DDXXD motif motif. Glu423, Arg486, and Asn489 together coordinate dimethylallyl diphosphate. 3 residues coordinate Mg(2+): Asn489, Ser493, and Glu497.

It belongs to the terpene synthase family. Tpsb subfamily. Mg(2+) serves as cofactor. As to expression, predominantly expressed in leaves.

It is found in the plastid. It localises to the chloroplast. The enzyme catalyses dimethylallyl diphosphate = isoprene + diphosphate. The protein operates within terpene metabolism. In terms of biological role, lyase that catalyzes the formation of isoprene from dimethylallyl diphosphate, but not from isopentenyl diphosphate or geranyl diphosphate. This Populus alba (White poplar) protein is Isoprene synthase, chloroplastic.